The sequence spans 459 residues: Serine/threonine-protein kinase 12 (459 aa).

The interval 1–30 (MEEDYQQPRFTIGRQSSMAPEKIPEPSVHS) is disordered. ANK repeat units lie at residues 42–71 (DGGV…DANY), 75–104 (DDRT…EVDP), and 108–137 (WGST…KHPM). The 316-residue stretch at 102–417 (VDPKDRWGST…EIIKRLESIL (316 aa)) folds into the Protein kinase domain. ATP is bound by residues 108–116 (WGSTPFADA) and Lys184. Asp281 functions as the Proton acceptor in the catalytic mechanism.

This sequence belongs to the protein kinase superfamily. Ser/Thr protein kinase family. As to quaternary structure, interacts with BLUS1, PHOT1 and PHOT2. As to expression, accumulates in leaves, stems, petioles and roots, especially in guard cells.

The protein resides in the cytoplasm. The protein localises to the cytosol. The catalysed reaction is L-seryl-[protein] + ATP = O-phospho-L-seryl-[protein] + ADP + H(+). It catalyses the reaction L-threonyl-[protein] + ATP = O-phospho-L-threonyl-[protein] + ADP + H(+). Functionally, serine/threonine protein kinase that phosphorylates proteins on serine and threonine residues. Mediates blue light-dependent stomatal opening in guard cells by promoting plasma membrane-type ATPases (AHA1 and AHA2) phosphorylation. This is Serine/threonine-protein kinase 12 from Arabidopsis thaliana (Mouse-ear cress).